The sequence spans 221 residues: MKKIVSILFMFGLVMGFSQFQPSTVFAADKVVHETIIVPKNTTYDGKGQRFVAGKELGDGSQSENQDPVFRVEDGATLKNVVLGAPAADGVHTYGNVNIQNVKWEDVGEDALTVKKEGKVTIDGGSAQKASDKIFQINKASTFTVKNFTADNGGKFIRQLGGSTFHVDVIIDKCTITNMKEAIFRTDSKTSTVRMTNTRYSNVGQKWIGVQHIYENNNTQF.

An N-terminal signal peptide occupies residues 1 to 27; sequence MKKIVSILFMFGLVMGFSQFQPSTVFA.

This sequence belongs to the polysaccharide lyase 3 family. The cofactor is Ca(2+).

The protein resides in the secreted. The catalysed reaction is Eliminative cleavage of (1-&gt;4)-alpha-D-galacturonan to give oligosaccharides with 4-deoxy-alpha-D-galact-4-enuronosyl groups at their non-reducing ends.. It carries out the reaction Eliminative cleavage of (1-&gt;4)-alpha-D-galacturonan methyl ester to give oligosaccharides with 4-deoxy-6-O-methyl-alpha-D-galact-4-enuronosyl groups at their non-reducing ends.. The protein operates within glycan metabolism; pectin degradation; 2-dehydro-3-deoxy-D-gluconate from pectin: step 2/5. Catalyzes the depolymerization of both polygalacturonate and pectins of methyl esterification degree from 22 to 89%, with an endo mode of action. In contrast to the majority of pectate lyases, displays high activity on highly methylated pectins. Is also able to cleave trigalacturonate to galacturonic acid and unsaturated digalacturonate. This Bacillus subtilis (strain 168) protein is Pectate lyase C (pelC).